The primary structure comprises 250 residues: MEIILGIVQGLTEFLPISSSGHLSVFSKLFNLKPDLSVFALLHLATLAAIVIFVGKELTEIIKGLIKLEKNYINLTLKIIVSTIPAAIFGVLLESKIEASLSNLKIISFFFLVTSAALLISDKIKGNKDLSTLTYKDALVIGIMQALAIFPGISRSGFTLFGSLLIGLEREIALKYSFLVSIPVILGAGLLEIKNISLNSYSISSAIVAFFFGLLSLFILKKATISKNLKIFSAYCIFISIFSFVLGGIK.

A run of 7 helical transmembrane segments spans residues 35–55, 73–93, 100–120, 146–166, 171–191, 200–220, and 229–249; these read DLSV…IFVG, INLT…GVLL, SLSN…ALLI, ALAI…SLLI, EIAL…AGLL, SYSI…LFIL, and LKIF…LGGI.

It belongs to the UppP family.

The protein resides in the cell inner membrane. It catalyses the reaction di-trans,octa-cis-undecaprenyl diphosphate + H2O = di-trans,octa-cis-undecaprenyl phosphate + phosphate + H(+). In terms of biological role, catalyzes the dephosphorylation of undecaprenyl diphosphate (UPP). Confers resistance to bacitracin. The protein is Undecaprenyl-diphosphatase of Thermosipho melanesiensis (strain DSM 12029 / CIP 104789 / BI429).